Here is a 209-residue protein sequence, read N- to C-terminus: Shikimate kinase (209 aa).

47 to 52 provides a ligand contact to ATP; that stretch reads GAGKTT. Residue threonine 51 coordinates Mg(2+). Substrate is bound by residues aspartate 69, arginine 93, and glycine 115. Residue arginine 153 participates in ATP binding. Arginine 172 provides a ligand contact to substrate.

The protein belongs to the shikimate kinase family. As to quaternary structure, monomer. It depends on Mg(2+) as a cofactor.

Its subcellular location is the cytoplasm. It carries out the reaction shikimate + ATP = 3-phosphoshikimate + ADP + H(+). The protein operates within metabolic intermediate biosynthesis; chorismate biosynthesis; chorismate from D-erythrose 4-phosphate and phosphoenolpyruvate: step 5/7. Catalyzes the specific phosphorylation of the 3-hydroxyl group of shikimic acid using ATP as a cosubstrate. This chain is Shikimate kinase, found in Bordetella avium (strain 197N).